The following is a 162-amino-acid chain: Selenoprotein F (162 aa).

The signal sequence occupies residues Met-1–Ala-28. Sec-93 is a non-standard amino acid (selenocysteine).

The protein belongs to the selenoprotein M/F family. As to quaternary structure, forms a tight complex with UGGT1/UGCGL1. Interacts with UGGT2/UGCGL2. Interacts with RDH11.

The protein localises to the endoplasmic reticulum lumen. Functionally, may be involved in redox reactions associated with the formation of disulfide bonds. May contribute to the quality control of protein folding in the endoplasmic reticulum. May regulate protein folding by enhancing the catalytic activity of UGGT1/UGCGL1 and UGGT2/UGCGL2. This Bos taurus (Bovine) protein is Selenoprotein F.